A 389-amino-acid chain; its full sequence is Type 2 DNA topoisomerase 6 subunit A (389 aa).

The Topo IIA-type catalytic domain occupies 13–161 (KARLRAAEVM…MLILSKEKGK (149 aa)). Tyrosine 107 serves as the catalytic O-(5'-phospho-DNA)-tyrosine intermediate. Glutamate 208 and aspartate 260 together coordinate Mg(2+).

This sequence belongs to the TOP6A family. Homodimer. Heterotetramer of two Top6A and two Top6B chains. Mg(2+) is required as a cofactor.

The enzyme catalyses ATP-dependent breakage, passage and rejoining of double-stranded DNA.. In terms of biological role, relaxes both positive and negative superturns and exhibits a strong decatenase activity. The chain is Type 2 DNA topoisomerase 6 subunit A from Aeropyrum pernix (strain ATCC 700893 / DSM 11879 / JCM 9820 / NBRC 100138 / K1).